A 146-amino-acid chain; its full sequence is MORN repeat-containing protein 4 (146 aa).

4 MORN repeats span residues 16-38 (YRGEWKEGRRHGFGQLVFADGGT), 39-61 (YLGHFENGLFNGFGVLTFSDGSR), 62-84 (YEGEFSQGKFNGVGVFIRYDNMT), and 85-107 (FEGEFKNGRVDGFGLLTFPDGSH).

In terms of assembly, interacts with MYO3A.

Its subcellular location is the cytoplasm. It localises to the cell projection. The protein localises to the filopodium tip. The protein resides in the stereocilium. Functionally, plays a role in promoting axonal degeneration following neuronal injury by toxic insult or trauma. This Mus musculus (Mouse) protein is MORN repeat-containing protein 4 (Morn4).